The primary structure comprises 127 residues: Large ribosomal subunit protein bL12c (127 aa).

The tract at residues 104–127 (GVAKDAAEEAKKQIEDAGGKASLK) is disordered. The span at 105–121 (VAKDAAEEAKKQIEDAG) shows a compositional bias: basic and acidic residues.

This sequence belongs to the bacterial ribosomal protein bL12 family. As to quaternary structure, homodimer. Part of the ribosomal stalk of the 50S ribosomal subunit. Forms a multimeric L10(L12)X complex, where L10 forms an elongated spine to which 2 to 4 L12 dimers bind in a sequential fashion. Binds GTP-bound translation factors.

The protein resides in the plastid. The protein localises to the chloroplast. In terms of biological role, forms part of the ribosomal stalk which helps the ribosome interact with GTP-bound translation factors. Is thus essential for accurate translation. In Trieres chinensis (Marine centric diatom), this protein is Large ribosomal subunit protein bL12c.